A 501-amino-acid chain; its full sequence is Large ribosomal subunit protein uL2m (501 aa).

2 disordered regions span residues 187-217 (GRERLSPLRGENTFSQSEGQRWKTQSGAPRR) and 459-501 (AMNP…KRRN). Over residues 198-213 (NTFSQSEGQRWKTQSG) the composition is skewed to polar residues. A compositionally biased stretch (basic and acidic residues) spans 464 to 474 (DHPHGGGEGRT).

It belongs to the universal ribosomal protein uL2 family.

Its subcellular location is the mitochondrion. This is Large ribosomal subunit protein uL2m (RPL2) from Marchantia polymorpha (Common liverwort).